We begin with the raw amino-acid sequence, 166 residues long: MTIVYLSLGTNMGDRAAYLQKALEALADLPQTRLLAQSSIYETTAWGKTGQADFLNMACQLDTQLTAADFLKETQAIEQSLGRVRHEKWGSRTIDIDILLFGEEVYDTKELKVPHPYMTERAFVLIPLLELQSDLKLPPNHKFLRDYLAALDQSDITLFSAQQTEF.

Belongs to the HPPK family.

The catalysed reaction is 6-hydroxymethyl-7,8-dihydropterin + ATP = (7,8-dihydropterin-6-yl)methyl diphosphate + AMP + H(+). It participates in cofactor biosynthesis; tetrahydrofolate biosynthesis; 2-amino-4-hydroxy-6-hydroxymethyl-7,8-dihydropteridine diphosphate from 7,8-dihydroneopterin triphosphate: step 4/4. Catalyzes the transfer of pyrophosphate from adenosine triphosphate (ATP) to 6-hydroxymethyl-7,8-dihydropterin, an enzymatic step in folate biosynthesis pathway. The sequence is that of 2-amino-4-hydroxy-6-hydroxymethyldihydropteridine pyrophosphokinase (folK) from Streptococcus pyogenes serotype M6 (strain ATCC BAA-946 / MGAS10394).